The primary structure comprises 311 residues: Glycerol-3-phosphate dehydrogenase [NAD(P)+] (311 aa).

4 residues coordinate NADPH: W11, R30, R31, and K95. Residues K95, G123, and S125 each contribute to the sn-glycerol 3-phosphate site. A127 is a binding site for NADPH. The sn-glycerol 3-phosphate site is built by K177, D230, S240, R241, and N242. K177 serves as the catalytic Proton acceptor. Residue R241 coordinates NADPH. NADPH contacts are provided by V265 and E267.

Belongs to the NAD-dependent glycerol-3-phosphate dehydrogenase family.

Its subcellular location is the cytoplasm. It catalyses the reaction sn-glycerol 3-phosphate + NAD(+) = dihydroxyacetone phosphate + NADH + H(+). It carries out the reaction sn-glycerol 3-phosphate + NADP(+) = dihydroxyacetone phosphate + NADPH + H(+). It participates in membrane lipid metabolism; glycerophospholipid metabolism. In terms of biological role, catalyzes the reduction of the glycolytic intermediate dihydroxyacetone phosphate (DHAP) to sn-glycerol 3-phosphate (G3P), the key precursor for phospholipid synthesis. The protein is Glycerol-3-phosphate dehydrogenase [NAD(P)+] of Bartonella bacilliformis (strain ATCC 35685 / KC583 / Herrer 020/F12,63).